Here is a 116-residue protein sequence, read N- to C-terminus: Large ribosomal subunit protein bL17 (116 aa).

It belongs to the bacterial ribosomal protein bL17 family. In terms of assembly, part of the 50S ribosomal subunit. Contacts protein L32.

The sequence is that of Large ribosomal subunit protein bL17 from Chloroflexus aggregans (strain MD-66 / DSM 9485).